The chain runs to 172 residues: Ribosome maturation factor RimM (172 aa).

A PRC barrel domain is found at 94-167 (EGSYYYKDII…VAHVIVPEGL (74 aa)).

It belongs to the RimM family. In terms of assembly, binds ribosomal protein uS19.

It localises to the cytoplasm. Functionally, an accessory protein needed during the final step in the assembly of 30S ribosomal subunit, possibly for assembly of the head region. Essential for efficient processing of 16S rRNA. May be needed both before and after RbfA during the maturation of 16S rRNA. It has affinity for free ribosomal 30S subunits but not for 70S ribosomes. This Lacticaseibacillus paracasei (strain ATCC 334 / BCRC 17002 / CCUG 31169 / CIP 107868 / KCTC 3260 / NRRL B-441) (Lactobacillus paracasei) protein is Ribosome maturation factor RimM.